The sequence spans 543 residues: Carotenoid 9,10(9',10')-cleavage dioxygenase 1 (543 aa).

The Fe cation site is built by H224, H272, H338, and H528.

Belongs to the carotenoid oxygenase family. As to quaternary structure, homodimer. It depends on Fe(2+) as a cofactor.

It carries out the reaction all-trans-zeaxanthin + 2 O2 = 4,9-dimethyldodeca-2,4,6,8,10-pentaenedial + 2 (3R)-hydroxy-beta-ionone. Functionally, cleaves a variety of carotenoids at the 9-10 and 9'-10' double bonds. Probably not involved in abscisic acid biosynthesis. This is Carotenoid 9,10(9',10')-cleavage dioxygenase 1 (CCD1) from Phaseolus vulgaris (Kidney bean).